The primary structure comprises 402 residues: Arginine deiminase (402 aa).

Catalysis depends on C392, which acts as the Amidino-cysteine intermediate.

This sequence belongs to the arginine deiminase family.

It is found in the cytoplasm. It carries out the reaction L-arginine + H2O = L-citrulline + NH4(+). Its pathway is amino-acid degradation; L-arginine degradation via ADI pathway; carbamoyl phosphate from L-arginine: step 1/2. This is Arginine deiminase from Mycobacterium avium (strain 104).